Consider the following 281-residue polypeptide: NADPH-dependent 7-cyano-7-deazaguanine reductase (281 aa).

87 to 89 (IES) is a binding site for substrate. Residue 89-90 (SK) coordinates NADPH. Cys188 (thioimide intermediate) is an active-site residue. Residue Asp195 is the Proton donor of the active site. Substrate is bound at residue 227–228 (HE). 256-257 (RG) is an NADPH binding site.

It belongs to the GTP cyclohydrolase I family. QueF type 2 subfamily. As to quaternary structure, homodimer.

The protein localises to the cytoplasm. It catalyses the reaction 7-aminomethyl-7-carbaguanine + 2 NADP(+) = 7-cyano-7-deazaguanine + 2 NADPH + 3 H(+). The protein operates within tRNA modification; tRNA-queuosine biosynthesis. In terms of biological role, catalyzes the NADPH-dependent reduction of 7-cyano-7-deazaguanine (preQ0) to 7-aminomethyl-7-deazaguanine (preQ1). This is NADPH-dependent 7-cyano-7-deazaguanine reductase from Photobacterium profundum (strain SS9).